Reading from the N-terminus, the 516-residue chain is MAAPEQPLPMSRGCQNSSSLSPPRGDRTLLVRHLPAELTAEEKEDLLKYFGAQSVRDLSDKGRLKHTAFATFPNEKTAVKALTRLHQLKLLGHTLVVEFAKEQDRVHSPCPSLGTEKKKRSDDPVEDDKEKKELDCLTIENGIAPNHGLTFPLNSCLKYMYPPPSSTILANIVNALASVPKFYVQVLHLMNKMNLPTPFGPITTRPPMYEDYMPLHAPLPPTSPQPPEEPPLPDEDEELSSKESEYESSDDEDRQRMTKLMELANLQPKRPKPIKQRHVRKKRKIKDMLNIPSSASHSLHPVLLPSDVFDQPQPVGNKKIEFHISTDMQVAFKKDLEKQQNCEEENSDLPATEADASNIGFGKIFPQPNLNITEEIKDDSDEMPSECISRRELEKGRISREEMETLSVFRSYEPGEPNCRIYVKNLAKHVQEKDLKFIFGRYVDFSSETQRIMFDIRLMKEGRMKGQAFIGLPNEKAAAKALKEANGYVLFGKPMVVQFARSARPKQDSKEGKRKC.

Disordered regions lie at residues 1–27 (MAAP…RGDR), 106–130 (VHSP…DDKE), 210–254 (EDYM…DEDR), and 264–283 (ANLQ…RKKR). Position 21 is a phosphoserine (Ser-21). Residues 27-102 (RTLLVRHLPA…HTLVVEFAKE (76 aa)) enclose the RRM 1 domain. Ser-108 is modified (phosphoserine). Residues 115–130 (TEKKKRSDDPVEDDKE) are compositionally biased toward basic and acidic residues. Pro residues predominate over residues 217 to 230 (APLPPTSPQPPEEP). Over residues 269 to 283 (KRPKPIKQRHVRKKR) the composition is skewed to basic residues. In terms of domain architecture, RRM 2 spans 419–502 (CRIYVKNLAK…KPMVVQFARS (84 aa)).

In terms of assembly, component of the U11/U12 snRNPs that are part of the U12-type spliceosome. Found in a complex with m(7)G-capped U12 snRNA. Interacts with PDCD7.

The protein resides in the nucleus. Functionally, participates in pre-mRNA U12-dependent splicing, performed by the minor spliceosome which removes U12-type introns. U12-type introns comprises less than 1% of all non-coding sequences. Binds to the 3'-stem-loop of m(7)G-capped U12 snRNA. The polypeptide is RNA-binding region-containing protein 3 (RNPC3) (Bos taurus (Bovine)).